A 463-amino-acid polypeptide reads, in one-letter code: MDQRGEDTTLAPHSRMSGDQTAQDPGSSLGELDQQNVVNRVVALPLVKATCTAVSSAYNSAKDRHPLLGSACRLAEHCVCSVTTCALDHAQPLLEHLQPQLATVNDLACRGLDKLEEKLPFLQQPSDMVVTSAKDTVAKSVTGMVDLAQRGRRWSGELRRSMSQAMDMVLGKSEKLVDRFLPMTEAELAVLAAEAEGPEVGTVEEQRQQQGYFVRLGSLSARLRHLAYEHSLGKLRQSKHRTQEMLAQLQETLELIQHMQRGASPSPTFHPPKTQELWGSWSPCLENGRSHSEVELETLALSRSLTLELQNAVDALAGCVRGLPPSAQAKVAEVQRSVDALQATFADAHCLGDVAPTALAEGRGSVARAHACVDEFLDLVLRAMPLPWLVGPFAPILVEQSEPLINLATCVDEVVGDPDPRWAHMDWPAQKRAWEAESADPGGQEAEPPRGQGKHTMMPELDF.

The segment at 1-32 is disordered; the sequence is MDQRGEDTTLAPHSRMSGDQTAQDPGSSLGEL. Residues 1 to 123 form an interaction with LIPE region; that stretch reads MDQRGEDTTL…KLEEKLPFLQ (123 aa). Residues 1–188 form an essential for lipid droplet targeting region; the sequence is MDQRGEDTTL…RFLPMTEAEL (188 aa). Phosphoserine is present on residues S17, S163, and S337. Over residues 17-26 the composition is skewed to polar residues; that stretch reads SGDQTAQDPG. The interval 200–463 is interaction with PNPLA2 and ABHD5; sequence VGTVEEQRQQ…KHTMMPELDF (264 aa). The segment at 433–463 is disordered; the sequence is AWEAESADPGGQEAEPPRGQGKHTMMPELDF. Positions 444–463 are necessary for mitochondria recruitment at the lipid droplet surface; it reads QEAEPPRGQGKHTMMPELDF.

The protein belongs to the perilipin family. As to quaternary structure, homooligomer. Interacts with PNPLA2; prevents interaction of PNPLA2 with ABHD5. Interacts with ABHD5; targets ABHD5 to lipid droplets and promotes interaction of ABHD5 with PNPLA2. Interacts with LIPE. Post-translationally, phosphorylated by PKA. Phosphorylated on serine in skeletal muscle at rest or with lipolytic stimulation. Highly expressed in oxidative tissues, including heart, liver, brown adipose tissue (BAT) and slow-twitch fibers of skeletal muscle. Lower expression in epididymal white adipose tissue and anterior tibialis and quadriceps. Expressed in adrenal glands. Isoform 2 has the highest expression in heart.

It is found in the lipid droplet. The protein resides in the cytoplasm. The protein localises to the mitochondrion. Lipid droplet-associated protein that maintains the balance between lipogenesis and lipolysis and also regulates fatty acid oxidation in oxidative tissues. Recruits mitochondria to the surface of lipid droplets and is involved in lipid droplet homeostasis by regulating both the storage of fatty acids in the form of triglycerides and the release of fatty acids for mitochondrial fatty acid oxidation. In lipid droplet triacylglycerol hydrolysis, plays a role as a scaffolding protein for three major key lipolytic players: ABHD5, PNPLA2 and LIPE. Reduces the triacylglycerol hydrolase activity of PNPLA2 by recruiting and sequestering PNPLA2 to lipid droplets. Phosphorylation by PKA enables lipolysis probably by promoting release of ABHD5 from the perilipin scaffold and by facilitating interaction of ABHD5 with PNPLA2. Also increases lipolysis through interaction with LIPE and upon PKA-mediated phosphorylation of LIPE. The chain is Perilipin-5 (Plin5) from Mus musculus (Mouse).